The chain runs to 196 residues: Secreted phosphoprotein 24 (196 aa).

Positions 1–19 (MKWCGVLMVALLQSLCCSG) are cleaved as a signal peptide. 2 disulfide bridges follow: C83-C94 and C107-C125. Residues 125–196 (CGQDSSSSES…RGDSFGNHLE (72 aa)) form a disordered region. A compositionally biased stretch (low complexity) spans 129–138 (SSSSESSSEE).

Belongs to the SPP2 family. Post-translationally, multiply phosphorylated at serine residues.

It is found in the secreted. Functionally, could coordinate an aspect of bone turnover. In Salmo salar (Atlantic salmon), this protein is Secreted phosphoprotein 24 (spp2).